Consider the following 198-residue polypeptide: Recombination protein RecR (198 aa).

A C4-type zinc finger spans residues 57 to 72 (CAQCRTLTEHSLCEYC). Positions 80-175 (SLLCIVESPA…RTTRIAHGIP (96 aa)) constitute a Toprim domain.

This sequence belongs to the RecR family.

May play a role in DNA repair. It seems to be involved in an RecBC-independent recombinational process of DNA repair. It may act with RecF and RecO. The polypeptide is Recombination protein RecR (Methylococcus capsulatus (strain ATCC 33009 / NCIMB 11132 / Bath)).